Consider the following 889-residue polypeptide: Alanine--tRNA ligase (889 aa).

4 residues coordinate Zn(2+): His-587, His-591, Cys-691, and His-695. Disordered stretches follow at residues 734 to 760 and 866 to 889; these read QQEQ…EENK and AQGG…MILG. The span at 872–881 shows a compositional bias: basic and acidic residues; that stretch reads DTSKKDEAIS.

It belongs to the class-II aminoacyl-tRNA synthetase family. Zn(2+) serves as cofactor.

The protein resides in the cytoplasm. The catalysed reaction is tRNA(Ala) + L-alanine + ATP = L-alanyl-tRNA(Ala) + AMP + diphosphate. Functionally, catalyzes the attachment of alanine to tRNA(Ala) in a two-step reaction: alanine is first activated by ATP to form Ala-AMP and then transferred to the acceptor end of tRNA(Ala). Also edits incorrectly charged Ser-tRNA(Ala) and Gly-tRNA(Ala) via its editing domain. In Nitrosopumilus maritimus (strain SCM1), this protein is Alanine--tRNA ligase.